Consider the following 199-residue polypeptide: NAD(P)H dehydrogenase (quinone) (199 aa).

The region spanning 4–190 (VLVLYYSAYG…DGARFQGKRV (187 aa)) is the Flavodoxin-like domain. FMN is bound by residues 10 to 15 (SAYGHM) and 78 to 80 (TRY). Tyrosine 12 lines the NAD(+) pocket. Tryptophan 98 serves as a coordination point for substrate. FMN-binding positions include 113-119 (STATQHG) and histidine 134. The tract at residues 157–185 (GGAPYGMTTTADGDGSRQPSEQELDGARF) is disordered. Polar residues predominate over residues 163–177 (MTTTADGDGSRQPSE).

The protein belongs to the WrbA family. FMN is required as a cofactor.

It carries out the reaction a quinone + NADH + H(+) = a quinol + NAD(+). The catalysed reaction is a quinone + NADPH + H(+) = a quinol + NADP(+). This Brucella anthropi (strain ATCC 49188 / DSM 6882 / CCUG 24695 / JCM 21032 / LMG 3331 / NBRC 15819 / NCTC 12168 / Alc 37) (Ochrobactrum anthropi) protein is NAD(P)H dehydrogenase (quinone).